The following is a 485-amino-acid chain: Ulvan lyase (485 aa).

The first 33 residues, 1-33, serve as a signal peptide directing secretion; that stretch reads MIRNDTMLKGQFVLKKTQIALSAALMGSVLLTG. A lipid anchor (N-palmitoyl cysteine) is attached at C34. C34 is lipidated: S-diacylglycerol cysteine. N64 and N126 together coordinate substrate. Residues 108–128 are disordered; that stretch reads FKAGTSELGRRDGGKKFDNHG. Positions 115 to 128 are enriched in basic and acidic residues; that stretch reads LGRRDGGKKFDNHG. The Proton donor role is filled by H127. Positions 129 and 147 each coordinate substrate. The Proton acceptor role is filled by Y192. The substrate site is built by R208, H212, and Y250. H212 lines the Zn(2+) pocket. H268, C270, and H282 together coordinate Zn(2+). H282 contacts substrate.

It belongs to the polysaccharide lyase 25 family.

The protein resides in the cell membrane. In terms of biological role, ulvan lyase involved in ulvan degradation. Ulvan is the main polysaccharide component of the Ulvales (green seaweed) cell wall. It is composed of disaccharide building blocks comprising 3-sulfated rhamnose (Rha3S) linked to D-glucuronic acid (GlcA), L-iduronic acid (IduA), or D-xylose (Xyl). Ulvan lyase catalyzes the endolytic cleavage of the glycosidic bond between Rha3S and the uronic acids GlcA or IduA, producing oligosaccharides that have unsaturated 4-deoxy-L-threo-hex-4-enopyranosiduronic acid (deltaUA) at the non-reducing end. This results eventually in the degradation of the ulvan polysaccharide into deltaUA-Rha3S disaccharides and deltaUA-Rha3S-Xyl-Rha3S tetrasaccharides. In Alteromonas sp. (strain LOR), this protein is Ulvan lyase.